A 579-amino-acid polypeptide reads, in one-letter code: MAGTVRTACLLVAMLLGLGCLGQAQPPPPPDATCHQVRSFFQRLQPGLKWVPETPVPGSDLQVCLPKGPTCCSRKMEEKYQLTARLNMEQLLQSASMELKFLIIQNAAVFQEAFEIVVRHAKNYTNAMFKNNYPSLTPQAFEFVGEFFTDVSLYILGSDINVDDMVNELFDSLFPVIYTQMMNPGLPESVLDINECLRGARRDLKVFGSFPKLIMTQVSKSLQVTRIFLQALNLGIEVINTTDHLKFSKDCGRMLTRMWYCSYCQGLMMVKPCGGYCNVVMQGCMAGVVEIDKYWREYILSLEELVNGMYRIYDMENVLLGLFSTIHDSIQYVQKNGGKLTTTIGKLCAHSQQRQYRSAYYPEDLFIDKKILKVAHVEHEETLSSRRRELIQKLKSFINFYSALPGYICSHSPVAENDTLCWNGQELVERYSQKAARNGMKNQFNLHELKMKGPEPVVSQIIDKLKHINQLLRTMSVPKGKVLDKSLDEEGLESGDCGDDEDECIGSSGDGMVKVKNQLRFLAELAYDLDVDDAPGNKQHGNQKDNEITTSHSVGNMPSPLKILISVAIYVACFFFLVH.

A signal peptide spans 1 to 24; it reads MAGTVRTACLLVAMLLGLGCLGQA. At Q25 the chain carries Pyrrolidone carboxylic acid. Intrachain disulfides connect C34/C71, C64/C261, C72/C264, C196/C348, C251/C284, C273/C421, and C277/C409. 2 N-linked (GlcNAc...) asparagine glycosylation sites follow: N123 and N240. Residue S351 is modified to Phosphoserine. N-linked (GlcNAc...) asparagine glycosylation occurs at N417. O-linked (Xyl...) (glycosaminoglycan) serine glycosylation is found at S494 and S508. The disordered stretch occupies residues 533-552; that stretch reads DAPGNKQHGNQKDNEITTSH. The GPI-anchor amidated serine moiety is linked to residue S553. A propeptide spans 554-579 (removed in mature form); it reads VGNMPSPLKILISVAIYVACFFFLVH.

The protein belongs to the glypican family. Heterodimer; disulfide-linked. Cleavage by a furin-like convertase results in production of alpha and beta chains which form a disulfide-linked heterodimer. Interacts with DPP4. Interacts with FGF2. Interacts with WNT5A. Also interacts with WNT3A and WNT7B. Interacts with hedgehog protein SHH; the heparan sulfate chains are not required for the interaction. Also interacts with hedgehog protein IHH. Interacts with CD81. Interacts with Wnt receptors FZD4, FZD7 and FZD8; the heparan sulfate chains are required for the interaction. In terms of processing, O-glycosylated; contains heparan sulfate and/or chondroitin sulfate. Post-translationally, cleaved intracellularly by a furin-like convertase to generate 2 subunits, alpha and beta, which remain associated through disulfide bonds and are associated with the cell surface via the GPI-anchor. This processing is essential for its role in inhibition of hedgehog signaling. A second proteolytic event may result in cleavage of the protein on the cell surface, separating it from the GPI-anchor and leading to its shedding from the cell surface. In terms of tissue distribution, in the developing limb, absent from the apical epidermal ridge at 11 dpc but highly expressed in the underlying mesenchyme. Expression in the mesenchyme at this stage is asymmetric with highest levels in the regions of the distal mesenchyme within the progress zone and within the proximal anterior and posterior limb bud. At later developmental stages including 12.5 and 13.5 dpc, expression is restricted to the interdigital webs and the regions of chondrocytic differentiation of the developing bones. In the embryonic kidney, expressed in both the ureteric bud and mesenchymal cells as early as 13.5 dpc. Expression at 16.5 dpc is similar to that at 13.5 dpc but decreases by 18.5 dpc.

The protein resides in the cell membrane. In terms of biological role, cell surface proteoglycan. Negatively regulates the hedgehog signaling pathway when attached via the GPI-anchor to the cell surface by competing with the hedgehog receptor PTC1 for binding to hedgehog proteins. Binding to the hedgehog protein SHH triggers internalization of the complex by endocytosis and its subsequent lysosomal degradation. Positively regulates the canonical Wnt signaling pathway by binding to the Wnt receptor Frizzled and stimulating the binding of the Frizzled receptor to Wnt ligands. Positively regulates the non-canonical Wnt signaling pathway. Binds to CD81 which decreases the availability of free CD81 for binding to the transcriptional repressor HHEX, resulting in nuclear translocation of HHEX and transcriptional repression. Inhibits the dipeptidyl peptidase activity of DPP4. Plays a role in limb patterning and skeletal development by controlling the cellular response to BMP4. Modulates the effects of growth factors BMP2, BMP7 and FGF7 on renal branching morphogenesis. Required for coronary vascular development. Plays a role in regulating cell movements during gastrulation. This Mus musculus (Mouse) protein is Glypican-3 (Gpc3).